The primary structure comprises 1134 residues: Sterol regulatory element-binding protein 1 (1134 aa).

The interval 1–60 is transcriptional activation (acidic); that stretch reads MDELAFGEAALEQTLAEMCELDTAVLNDIEDMLQLINNQDSDFPGLFDAPYAGGETGDTG. The Cytoplasmic segment spans residues 1–477; the sequence is MDELAFGEAA…HSRGMLDRSR (477 aa). Residues 27–35 carry the 9aaTAD motif; that stretch reads NDIEDMLQL. The interval 46–73 is disordered; sequence LFDAPYAGGETGDTGPSSPGANSPESFS. The segment covering 59 to 69 has biased composition (polar residues); the sequence is TGPSSPGANSP. 2 positions are modified to phosphoserine: S96 and S115. Disordered regions lie at residues 130 to 149 and 170 to 195; these read LQPA…SFPA and SGTL…VLPT. Positions 170-179 are enriched in polar residues; sequence SGTLPGNTQQ. Residues 227–487 form an interaction with LMNA region; sequence QQVPVVLQPH…LALCVLAFLC (261 aa). Residues 317 to 367 enclose the bHLH domain; sequence EKRTAHNAIEKRYRSSINDKIVELKDLVVGTEAKLNKSAVLRKAIDYIRFL. S331 and S332 each carry phosphoserine; by SIK1. Residues 367-388 form a leucine-zipper region; the sequence is LQHSNQKLKQENLTLRSAHKSK. Residue S389 is modified to Phosphoserine; by AMPK. Position 395 is a phosphoserine; by SIK1 (S395). Positions 415-468 are disordered; sequence VETLTPPPSDAGSPSQSSPLSFGSRASSSGGSDSEPDSPAFEDSQVKAQRLPSH. Residues 424 to 453 show a composition bias toward low complexity; that stretch reads DAGSPSQSSPLSFGSRASSSGGSDSEPDSP. S448 is modified (phosphoserine). A helical transmembrane segment spans residues 478 to 498; that stretch reads LALCVLAFLCLTCNPLASLFG. The Lumenal portion of the chain corresponds to 499–536; it reads WGILTPSDATGTHRSSGRSMLEAESRDGSNWTQWLLPP. Residues 537-557 traverse the membrane as a helical segment; the sequence is LVWLANGLLVLACLALLFVYG. The Cytoplasmic segment spans residues 558–1134; the sequence is EPVTRPHSGP…LGGGTTVTSS (577 aa). S1047 carries the phosphoserine modification.

It belongs to the SREBP family. As to quaternary structure, forms a tight complex with SCAP, the SCAP-SREBP complex, in the endoplasmic reticulum membrane and the Golgi apparatus. Interacts with PAQR3; the interaction anchors the SCAP-SREBP complex to the Golgi apparatus in low cholesterol conditions. Efficient DNA binding of the soluble transcription factor fragment requires dimerization with another bHLH protein. Interacts with CEBPA, the interaction produces a transcriptional synergy. Interacts with LMNA. In terms of processing, processed in the Golgi apparatus, releasing the protein from the membrane. At low cholesterol the SCAP-SREBP complex is recruited into COPII vesicles for export from the endoplasmic reticulum. In the Golgi, complex SREBPs are cleaved sequentially by site-1 (MBTPS1, S1P) and site-2 (MBTPS2, S2P) proteases. The first cleavage by site-1 protease occurs within the luminal loop, the second cleavage by site-2 protease occurs within the first transmembrane domain, releasing the transcription factor from the Golgi membrane. Phosphorylated by AMPK, leading to suppress protein processing and nuclear translocation, and repress target gene expression. Phosphorylation at Ser-389 by SIK1 represses activity possibly by inhibiting DNA-binding. Post-translationally, SCAP-free SREBF1 is ubiquitinated by the BCR(ARMC5) complex, leading to its degradation. In terms of processing, ubiquitinated; the nuclear form has a rapid turnover and is rapidly ubiquitinated and degraded by the proteasome in the nucleus. As to expression, predominant isoform expressed in most tissues. Predominates in liver, adrenal gland, brain and adipose tissue. Also found in kidney, thymus, testis, muscle, jejunum, and ileum. In terms of tissue distribution, expressed only in select tissues, such as intestinal epithelial, heart, macrophage and bone marrow dendritic cells. Also found in kidney, thymus, testis, muscle, jejunum, and ileum.

The protein resides in the endoplasmic reticulum membrane. The protein localises to the golgi apparatus membrane. It is found in the cytoplasmic vesicle. It localises to the COPII-coated vesicle membrane. Its subcellular location is the nucleus. Activation by cleavage is down-regulated upon activation of SIRT3-dependent PRKAA1/AMPK-alpha signaling cascade which leads to inhibition of ATP-consuming lipogenesis to restore cellular energy balance. Its function is as follows. Precursor of the transcription factor form (Processed sterol regulatory element-binding protein 1), which is embedded in the endoplasmic reticulum membrane. Low sterol concentrations promote processing of this form, releasing the transcription factor form that translocates into the nucleus and activates transcription of genes involved in cholesterol biosynthesis and lipid homeostasis. Functionally, key transcription factor that regulates expression of genes involved in cholesterol biosynthesis and lipid homeostasis. Binds to the sterol regulatory element 1 (SRE-1) (5'-ATCACCCCAC-3'). Has dual sequence specificity binding to both an E-box motif (5'-ATCACGTGA-3') and to SRE-1 (5'-ATCACCCCAC-3'). Regulates the promoters of genes involved in cholesterol biosynthesis and the LDL receptor (LDLR) pathway of sterol regulation. In terms of biological role, isoform expressed only in select tissues, which has higher transcriptional activity compared to SREBP-1C. Able to stimulate both lipogenic and cholesterogenic gene expression. Has a role in the nutritional regulation of fatty acids and triglycerides in lipogenic organs such as the liver. Required for innate immune response in macrophages by regulating lipid metabolism. Predominant isoform expressed in most tissues, which has weaker transcriptional activity compared to isoform SREBP-1A. Primarily controls expression of lipogenic gene. Strongly activates global lipid synthesis in rapidly growing cells. The sequence is that of Sterol regulatory element-binding protein 1 from Mus musculus (Mouse).